Reading from the N-terminus, the 310-residue chain is tRNA-cytidine(32) 2-sulfurtransferase (310 aa).

Residues 45–50 carry the PP-loop motif motif; sequence SGGKDS. [4Fe-4S] cluster is bound by residues cysteine 120, cysteine 123, and cysteine 211.

The protein belongs to the TtcA family. Homodimer. Mg(2+) is required as a cofactor. It depends on [4Fe-4S] cluster as a cofactor.

Its subcellular location is the cytoplasm. The enzyme catalyses cytidine(32) in tRNA + S-sulfanyl-L-cysteinyl-[cysteine desulfurase] + AH2 + ATP = 2-thiocytidine(32) in tRNA + L-cysteinyl-[cysteine desulfurase] + A + AMP + diphosphate + H(+). Its pathway is tRNA modification. In terms of biological role, catalyzes the ATP-dependent 2-thiolation of cytidine in position 32 of tRNA, to form 2-thiocytidine (s(2)C32). The sulfur atoms are provided by the cysteine/cysteine desulfurase (IscS) system. This is tRNA-cytidine(32) 2-sulfurtransferase from Shewanella sp. (strain ANA-3).